The sequence spans 354 residues: DNA polymerase IV (354 aa).

The UmuC domain occupies 8-189 (IIHIDMDCFY…LPLQKIPGVG (182 aa)). Residues aspartate 12 and aspartate 107 each coordinate Mg(2+). Glutamate 108 is an active-site residue.

Belongs to the DNA polymerase type-Y family. In terms of assembly, monomer. Mg(2+) serves as cofactor.

The protein localises to the cytoplasm. The catalysed reaction is DNA(n) + a 2'-deoxyribonucleoside 5'-triphosphate = DNA(n+1) + diphosphate. Its function is as follows. Poorly processive, error-prone DNA polymerase involved in untargeted mutagenesis. Copies undamaged DNA at stalled replication forks, which arise in vivo from mismatched or misaligned primer ends. These misaligned primers can be extended by PolIV. Exhibits no 3'-5' exonuclease (proofreading) activity. May be involved in translesional synthesis, in conjunction with the beta clamp from PolIII. The polypeptide is DNA polymerase IV (Vibrio vulnificus (strain CMCP6)).